The chain runs to 444 residues: Probable glycolate oxidase iron-sulfur subunit (444 aa).

4Fe-4S ferredoxin-type domains are found at residues 14–46 (FKERMDEGELLNCMRCGFCLPSCPTYIESGFQE) and 69–100 (EDVERSLSLCLGCRACEPVCPSGVKYGQLLEE). The [4Fe-4S] cluster site is built by cysteine 26, cysteine 29, cysteine 32, cysteine 36, cysteine 78, cysteine 81, cysteine 84, and cysteine 88.

In terms of assembly, the glycolate oxidase likely consists of several subunits including GlcD and GlcF. [4Fe-4S] cluster serves as cofactor.

It is found in the cell membrane. The enzyme catalyses glycolate + A = glyoxylate + AH2. It carries out the reaction (R)-lactate + A = pyruvate + AH2. In terms of biological role, component of a complex that catalyzes the oxidation of glycolate to glyoxylate. Is also able to oxidize D-lactate ((R)-lactate). Does not link directly to O(2), and 2,6-dichloroindophenol (DCIP) and phenazine methosulfate (PMS) can act as artificial electron acceptors in vitro, but the physiological molecule that functions as primary electron acceptor during glycolate oxidation is unknown. The chain is Probable glycolate oxidase iron-sulfur subunit (glcF) from Bacillus subtilis (strain 168).